Reading from the N-terminus, the 226-residue chain is Ribonuclease 3 (226 aa).

Positions 6 to 128 (FNKLQKKMGY…IIGGIFLDSN (123 aa)) constitute an RNase III domain. A Mg(2+)-binding site is contributed by E41. Residue D45 is part of the active site. N114 and E117 together coordinate Mg(2+). E117 is an active-site residue. The DRBM domain occupies 155 to 225 (DPKTRLQEYL…AKQALLLFNI (71 aa)).

This sequence belongs to the ribonuclease III family. In terms of assembly, homodimer. The cofactor is Mg(2+).

It is found in the cytoplasm. The enzyme catalyses Endonucleolytic cleavage to 5'-phosphomonoester.. Functionally, digests double-stranded RNA. Involved in the processing of primary rRNA transcript to yield the immediate precursors to the large and small rRNAs (23S and 16S). Processes some mRNAs, and tRNAs when they are encoded in the rRNA operon. Processes pre-crRNA and tracrRNA of type II CRISPR loci if present in the organism. In Wigglesworthia glossinidia brevipalpis, this protein is Ribonuclease 3.